Reading from the N-terminus, the 207-residue chain is MKATTIIGIAGGSGSGKTTVTNEIMKNLEGHSVALLAQDYYYKDQKHLTFDERLETNYDHPFAFDNDLLIENLKDLKNGKAVEVPTYDYASHTRSDITIDFKPKDVIIVEGIFALENKVLRDMMDVKIYVDTDADLRILRRLTRDTKERGRSMDSVINQYLSVVRPMHDQFIEPTKKYADIIIPEGGSNKVAIDIMTTKIQSLVSKQ.

11-18 (GGSGSGKT) is an ATP binding site.

Belongs to the uridine kinase family.

Its subcellular location is the cytoplasm. It catalyses the reaction uridine + ATP = UMP + ADP + H(+). The enzyme catalyses cytidine + ATP = CMP + ADP + H(+). The protein operates within pyrimidine metabolism; CTP biosynthesis via salvage pathway; CTP from cytidine: step 1/3. It participates in pyrimidine metabolism; UMP biosynthesis via salvage pathway; UMP from uridine: step 1/1. The protein is Uridine kinase of Staphylococcus aureus (strain Mu3 / ATCC 700698).